We begin with the raw amino-acid sequence, 465 residues long: MESLKIYNTLAREKQTFVPIEPGRVRMYVCGMTVYDYCHVGHARVMVVFDMVQRWLRASGYDVTYVRNITDIDDKIIKRAVENGETIGALTNRFIAAMHEDADALGVQRPDREPRATEYVPQMLSMIGRLQDNGLAYQAADGDVNYAVRKFPGYGKLSGKSLEDLRAGERVAANDAKQDPLDFVLWKSAKADEPAESRWASPWGEGRPGWHIECSAMSCDLLGTHFDLHGGGADLQFPHHENEIAQSEGASGSTFVNTWMHNGFVRVNDEKMSKSLGNFFTIRDVLKVYDPEVVRFFILRSHYRSDLNYSDVHLDDARHALTRLYTALKDVPAEAQARPDWNEPHGKRFREAMHDDFNTPVAMAVLFELATEVNKTRSPALASQLAALGGVMGLLVRDPHAFLQGGVGAAADGLDAAEVEARIEARRAAKAARDFARADGIRADLLAAGIVLEDKPGGVTEWRRA.

Cys30 is a Zn(2+) binding site. Residues 32–42 (MTVYDYCHVGH) carry the 'HIGH' region motif. 3 residues coordinate Zn(2+): Cys214, His239, and Glu243. Residues 271 to 275 (KMSKS) carry the 'KMSKS' region motif. Lys274 serves as a coordination point for ATP.

The protein belongs to the class-I aminoacyl-tRNA synthetase family. As to quaternary structure, monomer. It depends on Zn(2+) as a cofactor.

It is found in the cytoplasm. The enzyme catalyses tRNA(Cys) + L-cysteine + ATP = L-cysteinyl-tRNA(Cys) + AMP + diphosphate. The sequence is that of Cysteine--tRNA ligase from Ralstonia nicotianae (strain ATCC BAA-1114 / GMI1000) (Ralstonia solanacearum).